A 293-amino-acid chain; its full sequence is Epimerase family protein SDR39U1 (293 aa).

NADP(+)-binding positions include 31–32 (SR), 58–59 (LA), glutamate 77, arginine 82, and valine 160.

This sequence belongs to the NAD(P)-dependent epimerase/dehydratase family. SDR39U1 subfamily. Expressed in adrenal gland.

Putative NADP-dependent oxidoreductase. This Homo sapiens (Human) protein is Epimerase family protein SDR39U1 (SDR39U1).